Here is a 249-residue protein sequence, read N- to C-terminus: Sesquipedalian-1 (249 aa).

The 97-residue stretch at 17 to 113 (PVDNAGFLYK…WVKALSRASF (97 aa)) folds into the PH domain. 2 disordered regions span residues 134-159 (GGMA…LAPV) and 194-219 (EATF…HGPL). Over residues 140 to 152 (QPQPQSLPLPPSL) the composition is skewed to pro residues. Position 213 is a phosphoserine (Ser-213). Residues 223-235 (PFARLHECYGQEI) carry the F&amp;H motif.

It belongs to the sesquipedalian family. In terms of assembly, forms homodimers and heterodimers with PHETA2. Interacts with OCRL and INPP5B. Interaction with OCRL may be important for endosomal morphology and function.

The protein localises to the early endosome. It localises to the recycling endosome. It is found in the golgi apparatus. The protein resides in the trans-Golgi network. Its subcellular location is the cytoplasmic vesicle. The protein localises to the clathrin-coated vesicle. In terms of biological role, plays a role in endocytic trafficking. Required for receptor recycling from endosomes, both to the trans-Golgi network and the plasma membrane. In Homo sapiens (Human), this protein is Sesquipedalian-1.